A 316-amino-acid polypeptide reads, in one-letter code: Biotin synthase (316 aa).

The 225-residue stretch at 36–260 (NKIQISMLLN…LMPKSYIRLA (225 aa)) folds into the Radical SAM core domain. Cysteine 51, cysteine 55, and cysteine 58 together coordinate [4Fe-4S] cluster. Positions 95, 126, 186, and 258 each coordinate [2Fe-2S] cluster.

The protein belongs to the radical SAM superfamily. Biotin synthase family. In terms of assembly, homodimer. Requires [4Fe-4S] cluster as cofactor. It depends on [2Fe-2S] cluster as a cofactor.

It carries out the reaction (4R,5S)-dethiobiotin + (sulfur carrier)-SH + 2 reduced [2Fe-2S]-[ferredoxin] + 2 S-adenosyl-L-methionine = (sulfur carrier)-H + biotin + 2 5'-deoxyadenosine + 2 L-methionine + 2 oxidized [2Fe-2S]-[ferredoxin]. It functions in the pathway cofactor biosynthesis; biotin biosynthesis; biotin from 7,8-diaminononanoate: step 2/2. In terms of biological role, catalyzes the conversion of dethiobiotin (DTB) to biotin by the insertion of a sulfur atom into dethiobiotin via a radical-based mechanism. This Lawsonia intracellularis (strain PHE/MN1-00) protein is Biotin synthase.